An 887-amino-acid polypeptide reads, in one-letter code: MVTLWWPCLVLALLSGLETSGFPRSPLRLLGKRSLPEGVVDGIEIYSTKISCKVTSRFAHNVVTTRAVNRADKAKEVSFDVELPKTAFITNFTLTIDGVTYPGSVKEKEVAQKQYEKAVSQGKTAGLVKASGRKLEKFTVSVNVAAGSKVIFELTYEELLKRNKGKYEMYLKVQPKQLVRHFEIDAHIFEPQGISMLDADASFITNDLLGSALTKSFSGKKGHVSFKPSLDQQRSCPTCTDSLLNGDFTIVYDVNRESPGNVQIVNGYFVHFFAPQGLPVVPKNIAFVIDVSGSMSGRKIQQTREALLKILDDMKEEDYLNFILFSTGVTTWKDHLVKATPANLEEARAFVKNIRDRSMTNINDGLLRGIEMLNKAREDHLVPERSTSILVMLTDGDANTGESRPEKIQENVRNAIRGKFPLYNLGFGNNLNYNFLESLALENHGFARRIYEDSDASLQLQGFYEEVANPLLTNVELEYPENAILDLTRNSYPHFYDGSEIVVAGRLVDRNVDNFKADVKGHGALNDLTFTEEVDMKEMDAALKEQGYIFGDYIERLWAYLTIEQLLEKRKNARGDEKENITAEALELSLKYHFVTPLTSMVVTKPEDNEDQTAIADKPGEEAISASTAYLTSQQSSHSPYYYVDGDPHFIIQVPGKNDTICFNIDEKPGTVLSLIQDPVTGIAVTGQIIGEKGNNASSRTGKTYFGKLGIANAWMDFRIEVTTEKIILGNGDALSTFSWLDTVTVTQTGLSVTINRKKNMVVSFEDGISFVIVLHQVWKKHPVHQDFLGFYVVDSHRMSAQTHGLLGQFFQPFDFKVFDVRPGSDPMKPDATMVVKSHRLTVTRGSQKDYRKDASVGTKVVCWFVHNNGEGFIDGVHTDYIVPSLF.

Positions 1 to 21 (MVTLWWPCLVLALLSGLETSG) are cleaved as a signal peptide. Positions 22–33 (FPRSPLRLLGKR) are excised as a propeptide. Residues 29-158 (LLGKRSLPEG…KVIFELTYEE (130 aa)) form the VIT domain. N-linked (GlcNAc...) asparagine glycosylation is present at asparagine 91. Residues 282–442 (PKNIAFVIDV…YNFLESLALE (161 aa)) form the VWFA domain. N-linked (GlcNAc...) asparagine glycosylation is present at asparagine 580. Aspartate 647 bears the Aspartate 1-(chondroitin 4-sulfate)-ester mark. A propeptide spanning residues 648–887 (PHFIIQVPGK…HTDYIVPSLF (240 aa)) is cleaved from the precursor.

The protein belongs to the ITIH family. As to quaternary structure, I-alpha-I plasma protease inhibitors are assembled from one or two heavy chains (HC) and one light chain, bikunin. Pre-alpha-inhibitor (P-alpha-I) is composed of ITIH3/HC3 and bikunin. In terms of processing, heavy chains are linked to bikunin via chondroitin 4-sulfate esterified to the alpha-carboxyl of the C-terminal aspartate after propeptide cleavage.

The protein resides in the secreted. May act as a carrier of hyaluronan in serum or as a binding protein between hyaluronan and other matrix protein, including those on cell surfaces in tissues to regulate the localization, synthesis and degradation of hyaluronan which are essential to cells undergoing biological processes. This chain is Inter-alpha-trypsin inhibitor heavy chain H3 (Itih3), found in Rattus norvegicus (Rat).